Here is an 83-residue protein sequence, read N- to C-terminus: uncharacterized protein (83 aa).

Residues 50–70 form a helical membrane-spanning segment; sequence IMVFLGEAWIILIPFAIFCII.

Belongs to the plectrovirus ORF7 family.

The protein localises to the host membrane. This is an uncharacterized protein from Spiroplasma citri (SpV1).